The sequence spans 241 residues: Uracil-DNA glycosylase (241 aa).

Catalysis depends on aspartate 68, which acts as the Proton acceptor.

This sequence belongs to the uracil-DNA glycosylase (UDG) superfamily. UNG family.

Its subcellular location is the cytoplasm. The catalysed reaction is Hydrolyzes single-stranded DNA or mismatched double-stranded DNA and polynucleotides, releasing free uracil.. Its function is as follows. Excises uracil residues from the DNA which can arise as a result of misincorporation of dUMP residues by DNA polymerase or due to deamination of cytosine. In Sinorhizobium medicae (strain WSM419) (Ensifer medicae), this protein is Uracil-DNA glycosylase.